A 353-amino-acid chain; its full sequence is Beta-hexosaminidase (353 aa).

Residues D74, R82, R149, and 179–180 each bind substrate; that span reads KH. H192 functions as the Proton donor/acceptor in the catalytic mechanism. Residue D263 is the Nucleophile of the active site.

Belongs to the glycosyl hydrolase 3 family. NagZ subfamily.

The protein localises to the cytoplasm. It catalyses the reaction Hydrolysis of terminal non-reducing N-acetyl-D-hexosamine residues in N-acetyl-beta-D-hexosaminides.. It functions in the pathway cell wall biogenesis; peptidoglycan recycling. Its function is as follows. Plays a role in peptidoglycan recycling by cleaving the terminal beta-1,4-linked N-acetylglucosamine (GlcNAc) from peptide-linked peptidoglycan fragments, giving rise to free GlcNAc, anhydro-N-acetylmuramic acid and anhydro-N-acetylmuramic acid-linked peptides. The chain is Beta-hexosaminidase from Bordetella bronchiseptica (strain ATCC BAA-588 / NCTC 13252 / RB50) (Alcaligenes bronchisepticus).